The chain runs to 300 residues: Ribosomal protein bS6--L-glutamate ligase (300 aa).

Positions 104 to 287 constitute an ATP-grasp domain; the sequence is MQLLARQGID…IASKMIRWIE (184 aa). ATP-binding positions include Lys-141, 178–179, Asp-187, and 211–213; these read EY and RSN. 3 residues coordinate Mg(2+): Asp-248, Glu-260, and Asn-262. 3 residues coordinate Mn(2+): Asp-248, Glu-260, and Asn-262.

The protein belongs to the RimK family. The cofactor is Mg(2+). Mn(2+) serves as cofactor.

Functionally, an L-glutamate ligase that catalyzes the ATP-dependent post-translational addition of glutamate residues to the C-terminus of ribosomal protein bS6 (RpsF). Is also able to catalyze the synthesis of poly-alpha-glutamate in vitro, via ATP hydrolysis from unprotected glutamate as substrate. The number of glutamate residues added to either RpsF or to poly-alpha-glutamate changes with pH. This chain is Ribosomal protein bS6--L-glutamate ligase, found in Escherichia coli O81 (strain ED1a).